Here is a 345-residue protein sequence, read N- to C-terminus: Chorismate synthase (345 aa).

Belongs to the chorismate synthase family. In terms of assembly, homotetramer. FMNH2 is required as a cofactor.

The catalysed reaction is 5-O-(1-carboxyvinyl)-3-phosphoshikimate = chorismate + phosphate. It functions in the pathway metabolic intermediate biosynthesis; chorismate biosynthesis; chorismate from D-erythrose 4-phosphate and phosphoenolpyruvate: step 7/7. This chain is Chorismate synthase (aroC), found in Carsonella ruddii (strain PV).